The sequence spans 175 residues: uncharacterized protein (175 aa).

Residues 1–14 (MNTSSRIQLPSSND) show a composition bias toward polar residues. Disordered regions lie at residues 1–31 (MNTSSRIQLPSSNDAHVYDGRSNEPKASKRS) and 127–175 (ARSR…QSKR). The segment covering 16–27 (HVYDGRSNEPKA) has biased composition (basic and acidic residues). Low complexity predominate over residues 130–149 (RASSVSNSRLNSRTNSSVSL). A compositionally biased stretch (polar residues) spans 154 to 175 (GSSSWKNKIKNAVSNVTDQSKR).

The protein localises to the cytoplasm. The protein resides in the nucleus. This is an uncharacterized protein from Schizosaccharomyces pombe (strain 972 / ATCC 24843) (Fission yeast).